Reading from the N-terminus, the 52-residue chain is Keratin-associated protein 19-2 (52 aa).

It belongs to the KRTAP type 19 family. As to quaternary structure, interacts with hair keratins.

In the hair cortex, hair keratin intermediate filaments are embedded in an interfilamentous matrix, consisting of hair keratin-associated proteins (KRTAP), which are essential for the formation of a rigid and resistant hair shaft through their extensive disulfide bond cross-linking with abundant cysteine residues of hair keratins. The matrix proteins include the high-sulfur and high-glycine-tyrosine keratins. This Homo sapiens (Human) protein is Keratin-associated protein 19-2 (KRTAP19-2).